A 228-amino-acid polypeptide reads, in one-letter code: 2,3-bisphosphoglycerate-dependent phosphoglycerate mutase (228 aa).

Substrate contacts are provided by residues 8-15 (RHGQSQWN), 21-22 (TG), R60, 87-90 (ERHY), K98, 114-115 (RR), and 180-181 (GN). H9 serves as the catalytic Tele-phosphohistidine intermediate. The active-site Proton donor/acceptor is the E87.

It belongs to the phosphoglycerate mutase family. BPG-dependent PGAM subfamily. In terms of assembly, homodimer.

The enzyme catalyses (2R)-2-phosphoglycerate = (2R)-3-phosphoglycerate. The protein operates within carbohydrate degradation; glycolysis; pyruvate from D-glyceraldehyde 3-phosphate: step 3/5. In terms of biological role, catalyzes the interconversion of 2-phosphoglycerate and 3-phosphoglycerate. The chain is 2,3-bisphosphoglycerate-dependent phosphoglycerate mutase from Novosphingobium aromaticivorans (strain ATCC 700278 / DSM 12444 / CCUG 56034 / CIP 105152 / NBRC 16084 / F199).